A 98-amino-acid polypeptide reads, in one-letter code: U-megalopygitoxin(1)-Mo1 (98 aa).

Residues 1-17 form the signal peptide; sequence MYRETFVFCVLLAVVSA.

It belongs to the caterpillar 1 family. Contains 4 disulfide bonds. In terms of tissue distribution, expressed by the venom apparatus.

It localises to the secreted. Probable toxin. This Megalopyge opercularis (Southern flannel moth) protein is U-megalopygitoxin(1)-Mo1.